A 125-amino-acid polypeptide reads, in one-letter code: Cyclin-dependent protein kinase inhibitor SMR16 (125 aa).

Functionally, probable cyclin-dependent protein kinase (CDK) inhibitor that functions as a repressor of mitosis in the endoreduplication cell cycle. This chain is Cyclin-dependent protein kinase inhibitor SMR16, found in Arabidopsis thaliana (Mouse-ear cress).